Here is an 86-residue protein sequence, read N- to C-terminus: Cell division topological specificity factor (86 aa).

Belongs to the MinE family.

Its function is as follows. Prevents the cell division inhibition by proteins MinC and MinD at internal division sites while permitting inhibition at polar sites. This ensures cell division at the proper site by restricting the formation of a division septum at the midpoint of the long axis of the cell. The chain is Cell division topological specificity factor from Shewanella pealeana (strain ATCC 700345 / ANG-SQ1).